Consider the following 312-residue polypeptide: Molybdenum cofactor biosynthesis bifunctional protein (312 aa).

The molybdenum cofactor biosynthesis protein C stretch occupies residues 1-155; the sequence is MEFTHLDENG…GGKSSAAEYH (155 aa). Substrate-binding positions include 74–76 and 110–111; these read LCH and ME. Asp-125 is an active-site residue. The segment at 156-312 is molybdenum cofactor biosynthesis protein B; the sequence is PRTAILVMSD…FPMLKGDGHA (157 aa).

This sequence in the N-terminal section; belongs to the MoaC family. In the C-terminal section; belongs to the MoaB/Mog family.

The catalysed reaction is (8S)-3',8-cyclo-7,8-dihydroguanosine 5'-triphosphate = cyclic pyranopterin phosphate + diphosphate. The protein operates within cofactor biosynthesis; molybdopterin biosynthesis. Its function is as follows. Catalyzes the conversion of (8S)-3',8-cyclo-7,8-dihydroguanosine 5'-triphosphate to cyclic pyranopterin monophosphate (cPMP). This Chlorobaculum tepidum (strain ATCC 49652 / DSM 12025 / NBRC 103806 / TLS) (Chlorobium tepidum) protein is Molybdenum cofactor biosynthesis bifunctional protein (moaCB).